Reading from the N-terminus, the 396-residue chain is E3 ubiquitin-protein ligase NHLRC1 (396 aa).

The RING-type zinc finger occupies 23-69 (CKVCFERFGHRQQRRPRNLPCGHVVCLACVAALAHPRTLALECPFCR). NHL repeat units follow at residues 110 to 154 (ALTC…FDSG), 158 to 201 (AHQF…FDFF), 202 to 242 (GQIK…LEAD), 245 to 298 (EGVL…FNSS), 299 to 347 (MQLI…LGKP), and 348 to 391 (EEFP…FKVM).

In terms of assembly, interacts with AGL. Interacts (via the NHL repeats) with EPM2A/laforin. Forms a complex with EPM2A/laforin and HSP70.

The protein localises to the endoplasmic reticulum. The protein resides in the nucleus. It catalyses the reaction S-ubiquitinyl-[E2 ubiquitin-conjugating enzyme]-L-cysteine + [acceptor protein]-L-lysine = [E2 ubiquitin-conjugating enzyme]-L-cysteine + N(6)-ubiquitinyl-[acceptor protein]-L-lysine.. It participates in protein modification; protein ubiquitination. E3 ubiquitin-protein ligase. Together with the phosphatase EPM2A/laforin, appears to be involved in the clearance of toxic polyglucosan and protein aggregates via multiple pathways. In complex with EPM2A/laforin and HSP70, suppresses the cellular toxicity of misfolded proteins by promoting their degradation through the ubiquitin-proteasome system (UPS). Ubiquitinates the glycogen-targeting protein phosphatase subunits PPP1R3C/PTG and PPP1R3D in a laforin-dependent manner and targets them for proteasome-dependent degradation, thus decreasing glycogen accumulation. Polyubiquitinates EPM2A/laforin and ubiquitinates AGL and targets them for proteasome-dependent degradation. Also promotes proteasome-independent protein degradation through the macroautophagy pathway. In Rattus norvegicus (Rat), this protein is E3 ubiquitin-protein ligase NHLRC1 (Nhlrc1).